Consider the following 724-residue polypeptide: N-alpha-acetyltransferase 35, NatC auxiliary subunit (724 aa).

It belongs to the MAK10 family. In terms of assembly, component of the N-terminal acetyltransferase C (NatC) complex.

It is found in the cytoplasm. Its function is as follows. Auxillary component of the N-terminal acetyltransferase C (NatC) complex which catalyzes acetylation of N-terminal methionine residues. N-terminal acetylation protects proteins from ubiquitination and degradation by the N-end rule pathway. Regulates cell proliferation during embryonic development. The polypeptide is N-alpha-acetyltransferase 35, NatC auxiliary subunit (naa35) (Danio rerio (Zebrafish)).